The sequence spans 692 residues: Glycine--tRNA ligase beta subunit (692 aa).

The protein belongs to the class-II aminoacyl-tRNA synthetase family. As to quaternary structure, tetramer of two alpha and two beta subunits.

It is found in the cytoplasm. It catalyses the reaction tRNA(Gly) + glycine + ATP = glycyl-tRNA(Gly) + AMP + diphosphate. The polypeptide is Glycine--tRNA ligase beta subunit (Pseudoalteromonas atlantica (strain T6c / ATCC BAA-1087)).